The chain runs to 489 residues: Tyrosine-protein phosphatase MSG5 (489 aa).

Residues 1–18 show a composition bias toward basic and acidic residues; the sequence is MQFHSDKQHLDSKTDIDF. The tract at residues 1–30 is disordered; the sequence is MQFHSDKQHLDSKTDIDFKPNSPRSLQNRN. 3 positions are modified to phosphoserine: serine 22, serine 98, and serine 151. Threonine 178 is subject to Phosphothreonine. Residues 233–375 enclose the Tyrosine-protein phosphatase domain; the sequence is GPLLVLPPNL…LMEWGTMLSK (143 aa). Residue cysteine 319 is the Phosphocysteine intermediate of the active site. Disordered regions lie at residues 375–401 and 419–489; these read KNSP…VSST and LSSS…MFLP. The segment covering 419–450 has biased composition (low complexity); that stretch reads LSSSPNDSSVNSSEVTPRTPATLTGARTALAT. A compositionally biased stretch (basic and acidic residues) spans 451–460; sequence ERGEDDEHCK.

Belongs to the protein-tyrosine phosphatase family. Non-receptor class dual specificity subfamily.

It carries out the reaction O-phospho-L-tyrosyl-[protein] + H2O = L-tyrosyl-[protein] + phosphate. Functionally, dual specificity phosphatase that dephosphorylates MAP kinase FUS3 on both a Tyr and a Ser or Thr. Has a role in adaptation to pheromone. The polypeptide is Tyrosine-protein phosphatase MSG5 (MSG5) (Saccharomyces cerevisiae (strain ATCC 204508 / S288c) (Baker's yeast)).